The sequence spans 900 residues: Bifunctional uridylyltransferase/uridylyl-removing enzyme (900 aa).

The tract at residues 1–342 (MPQVDPELFD…WEGESGPIVP (342 aa)) is uridylyltransferase. The interval 343–705 (LNSRFQVRDG…TTQREFEGGT (363 aa)) is uridylyl-removing. The region spanning 461-583 (VDAHTLNVIK…VGDETHLDYL (123 aa)) is the HD domain. 2 consecutive ACT domains span residues 706 to 789 (QIFI…IIQR) and 816 to 896 (ILEI…PSPS).

Belongs to the GlnD family. The cofactor is Mg(2+).

The catalysed reaction is [protein-PII]-L-tyrosine + UTP = [protein-PII]-uridylyl-L-tyrosine + diphosphate. It catalyses the reaction [protein-PII]-uridylyl-L-tyrosine + H2O = [protein-PII]-L-tyrosine + UMP + H(+). Uridylyltransferase (UTase) activity is inhibited by glutamine, while glutamine activates uridylyl-removing (UR) activity. Its function is as follows. Modifies, by uridylylation and deuridylylation, the PII regulatory proteins (GlnB and homologs), in response to the nitrogen status of the cell that GlnD senses through the glutamine level. Under low glutamine levels, catalyzes the conversion of the PII proteins and UTP to PII-UMP and PPi, while under higher glutamine levels, GlnD hydrolyzes PII-UMP to PII and UMP (deuridylylation). Thus, controls uridylylation state and activity of the PII proteins, and plays an important role in the regulation of nitrogen fixation and metabolism. The chain is Bifunctional uridylyltransferase/uridylyl-removing enzyme from Stutzerimonas stutzeri (strain A1501) (Pseudomonas stutzeri).